The following is a 488-amino-acid chain: Katanin p60 ATPase-containing subunit A-like 1 (488 aa).

Met-1 carries the post-translational modification N-acetylmethionine. The interval 95–179 (DPAVWPPPVP…GASDSEIPKF (85 aa)) is disordered. Residues 116-127 (PNREVRPLRKDV) are compositionally biased toward basic and acidic residues. Residues 128–138 (GAGARGLVGRA) are compositionally biased toward low complexity. The span at 142–167 (SKSDKPASRDKDYRARGRDDKARKNV) shows a compositional bias: basic and acidic residues. A Phosphoserine modification is found at Ser-172. Residue 246-253 (GPPGTGKT) coordinates ATP.

This sequence belongs to the AAA ATPase family. Katanin p60 subunit A1 subfamily. A-like 1 sub-subfamily. In terms of assembly, interacts with KATNB1 and KATNBL1. As to expression, widely expressed, including in testis, brain, heart, lung, kidney, liver, spleen, seminal vesicles and ovary. In testis, restricted to Sertoli cells within the seminiferous epithelium (at protein level).

It is found in the cytoplasm. The protein localises to the cytoskeleton. It localises to the spindle pole. Its subcellular location is the spindle. It carries out the reaction n ATP + n H2O + a microtubule = n ADP + n phosphate + (n+1) alpha/beta tubulin heterodimers.. Functionally, regulates microtubule dynamics in Sertoli cells, a process that is essential for spermiogenesis and male fertility. Severs microtubules in an ATP-dependent manner, promoting rapid reorganization of cellular microtubule arrays. Has microtubule-severing activity in vitro. The polypeptide is Katanin p60 ATPase-containing subunit A-like 1 (Katnal1) (Mus musculus (Mouse)).